A 534-amino-acid polypeptide reads, in one-letter code: Cyclin-L1 (534 aa).

2 cyclin-like regions span residues 94 to 196 and 209 to 293; these read ELIQ…RVLK and KIIV…KILQ. The segment at 327 to 534 is disordered; the sequence is LPEGAPVLDN…DHPGHSRHRR (208 aa). Residues 389-399 are compositionally biased toward basic and acidic residues; the sequence is KGRESRSRSGS. Composition is skewed to low complexity over residues 400 to 412 and 437 to 453; these read RDQS…SRSA and RSGS…TYKS. The RS stretch occupies residues 400 to 436; the sequence is RDQSYSRSPSRSASPKHRKSESYSTSSGSKSHSRSRS. Over residues 468-485 the composition is skewed to basic residues; that stretch reads SAHKARKSRSRSSSRSRS. Residues 486–495 show a composition bias toward basic and acidic residues; it reads RSRERSDHSG. Over residues 496-511 the composition is skewed to basic residues; it reads KYKKKSHYYRNHRHER. Basic and acidic residues predominate over residues 512 to 528; that stretch reads SRSYERASHRYDRDHPG.

Belongs to the cyclin family. Cyclin L subfamily.

Its subcellular location is the nucleus speckle. The protein resides in the nucleus. It is found in the nucleoplasm. In terms of biological role, involved in pre-mRNA splicing. The polypeptide is Cyclin-L1 (CCNL1) (Gallus gallus (Chicken)).